A 72-amino-acid polypeptide reads, in one-letter code: Neuropeptide SIFamide (72 aa).

The N-terminal stretch at 1 to 26 (MALRFTLTLLLVTILVAAILLGSSEA) is a signal peptide. An N-linked (GlcNAc...) asparagine glycan is attached at N34. At F38 the chain carries Phenylalanine amide. The propeptide occupies 42 to 72 (NSLDYDSAKMSAVCEVAMEACPMWFPQNDSK).

This sequence belongs to the FARP (FMRFamide related peptide) family. Strongly expressed in two pairs of neurons in the pars intercerebralis (at protein level).

It is found in the secreted. Ligand for the neuropeptide SIFamide receptor. Modulates sexual behavior by negatively regulating female receptivity to male courtship and by playing a role in male sex discrimination. Also involved in promoting sleep. The protein is Neuropeptide SIFamide of Drosophila melanogaster (Fruit fly).